A 443-amino-acid polypeptide reads, in one-letter code: Endoplasmic reticulum protein SC65 (443 aa).

The N-terminal stretch at 1 to 18 is a signal peptide; that stretch reads MARAAWGLLWLLLGSAGA. Residues 81–102 form a disordered region; sequence SGPATSQPRPAPGPDGDNEGDG. N-linked (GlcNAc...) asparagine glycosylation is present at Asn-367. 3 stretches are compositionally biased toward acidic residues: residues 387 to 398, 407 to 419, and 431 to 443; these read DEMELEETESLP, AEFE…EEGL, and GDED…PELA. The segment at 387–443 is disordered; sequence DEMELEETESLPEPEKPLSDAEFEGEGDYEEGLYADWWQEPDAKGDEDEAEPEPELA.

This sequence belongs to the leprecan family. Interacts with PLOD1, P3H3 and PPIB. Identified in a complex with PLOD1 and P3H3. In terms of tissue distribution, found in testis, brain, heart and at a much lower level in liver.

It localises to the endoplasmic reticulum. Functionally, part of a complex composed of PLOD1, P3H3 and P3H4 that catalyzes hydroxylation of lysine residues in collagen alpha chains and is required for normal assembly and cross-linking of collagen fibrils. Required for normal bone density and normal skin stability via its role in hydroxylation of lysine residues in collagen alpha chains and in collagen fibril assembly. The chain is Endoplasmic reticulum protein SC65 from Rattus norvegicus (Rat).